The following is a 175-amino-acid chain: MQVHVGRIGKPHGIRGEVTVEVLTDTPQERFSAGAVFSTEPTSAGPLTVETARWNKDILLLGFEEVNDRNRAETLRGTRLIFETDSVASDESESDSWYEHELIGLEARVGDQTVGKVSALNPMPAQDLLVITTAAGEEVLVPFVAEIVPEVDIAAGFIRLVPPGGLFDINRKDAE.

The 73-residue stretch at 94 to 166 (SDSWYEHELI…FIRLVPPGGL (73 aa)) folds into the PRC barrel domain.

The protein belongs to the RimM family. In terms of assembly, binds ribosomal protein uS19.

Its subcellular location is the cytoplasm. Its function is as follows. An accessory protein needed during the final step in the assembly of 30S ribosomal subunit, possibly for assembly of the head region. Essential for efficient processing of 16S rRNA. May be needed both before and after RbfA during the maturation of 16S rRNA. It has affinity for free ribosomal 30S subunits but not for 70S ribosomes. The polypeptide is Ribosome maturation factor RimM (Renibacterium salmoninarum (strain ATCC 33209 / DSM 20767 / JCM 11484 / NBRC 15589 / NCIMB 2235)).